Reading from the N-terminus, the 97-residue chain is Large ribosomal subunit protein bL31B (97 aa).

Belongs to the bacterial ribosomal protein bL31 family. Type B subfamily. Part of the 50S ribosomal subunit.

The polypeptide is Large ribosomal subunit protein bL31B (rpmE2) (Mycolicibacterium paratuberculosis (strain ATCC BAA-968 / K-10) (Mycobacterium paratuberculosis)).